The sequence spans 470 residues: ATP synthase subunit beta (470 aa).

Position 157 to 164 (157 to 164 (GGAGVGKT)) interacts with ATP.

The protein belongs to the ATPase alpha/beta chains family. As to quaternary structure, F-type ATPases have 2 components, CF(1) - the catalytic core - and CF(0) - the membrane proton channel. CF(1) has five subunits: alpha(3), beta(3), gamma(1), delta(1), epsilon(1). CF(0) has three main subunits: a(1), b(2) and c(9-12). The alpha and beta chains form an alternating ring which encloses part of the gamma chain. CF(1) is attached to CF(0) by a central stalk formed by the gamma and epsilon chains, while a peripheral stalk is formed by the delta and b chains.

It localises to the cell inner membrane. It catalyses the reaction ATP + H2O + 4 H(+)(in) = ADP + phosphate + 5 H(+)(out). Produces ATP from ADP in the presence of a proton gradient across the membrane. The catalytic sites are hosted primarily by the beta subunits. The polypeptide is ATP synthase subunit beta (Geobacter metallireducens (strain ATCC 53774 / DSM 7210 / GS-15)).